Reading from the N-terminus, the 409-residue chain is Dual-specificity RNA methyltransferase RlmN (409 aa).

Catalysis depends on Glu-121, which acts as the Proton acceptor. In terms of domain architecture, Radical SAM core spans 127–376; the sequence is EEGRGTLCIS…IRTPRGRDIL (250 aa). A disulfide bridge links Cys-134 with Cys-379. 3 residues coordinate [4Fe-4S] cluster: Cys-141, Cys-145, and Cys-148. S-adenosyl-L-methionine contacts are provided by residues 205–206, Ser-237, 259–261, and Asn-336; these read GE and SLH. Residue Cys-379 is the S-methylcysteine intermediate of the active site.

It belongs to the radical SAM superfamily. RlmN family. [4Fe-4S] cluster is required as a cofactor.

The protein localises to the cytoplasm. The enzyme catalyses adenosine(2503) in 23S rRNA + 2 reduced [2Fe-2S]-[ferredoxin] + 2 S-adenosyl-L-methionine = 2-methyladenosine(2503) in 23S rRNA + 5'-deoxyadenosine + L-methionine + 2 oxidized [2Fe-2S]-[ferredoxin] + S-adenosyl-L-homocysteine. It carries out the reaction adenosine(37) in tRNA + 2 reduced [2Fe-2S]-[ferredoxin] + 2 S-adenosyl-L-methionine = 2-methyladenosine(37) in tRNA + 5'-deoxyadenosine + L-methionine + 2 oxidized [2Fe-2S]-[ferredoxin] + S-adenosyl-L-homocysteine. Its function is as follows. Specifically methylates position 2 of adenine 2503 in 23S rRNA and position 2 of adenine 37 in tRNAs. m2A2503 modification seems to play a crucial role in the proofreading step occurring at the peptidyl transferase center and thus would serve to optimize ribosomal fidelity. The sequence is that of Dual-specificity RNA methyltransferase RlmN from Agrobacterium fabrum (strain C58 / ATCC 33970) (Agrobacterium tumefaciens (strain C58)).